The chain runs to 520 residues: Signal peptide peptidase-like 2A (520 aa).

A signal peptide spans 1 to 25; sequence MGPQRRLSPAGAALLWGFLLQLTAA. Residues 26-172 lie on the Lumenal side of the membrane; that stretch reads QEAILHASGN…PSWPNFDYTM (147 aa). N-linked (GlcNAc...) asparagine glycosylation is found at N58, N66, N74, N116, N126, and N149. The region spanning 63–151 is the PA domain; that stretch reads SLMNLTSTPL…YKDFRDMNQT (89 aa). N-linked (GlcNAc...) (complex) asparagine glycosylation is present at N155. Residues 173–193 traverse the membrane as a helical segment; sequence VVIFVIAVFTVALGGYWSGLV. Over 194-220 the chain is Cytoplasmic; the sequence is ELENLKAVTTEDREMRKKKEEYLTFSP. Residues 221–241 traverse the membrane as a helical segment; sequence LTVVIFVVICCVMMVLLYFFY. Over 242–247 the chain is Lumenal; the sequence is KWLVYV. Residues 248–268 form a helical membrane-spanning segment; sequence MIAIFCIASAMSLYNCLAALI. The Cytoplasmic segment spans residues 269 to 285; it reads HKIPYGQCTIACRGKNM. A helical membrane pass occupies residues 286-306; that stretch reads EVRLIFLSGLCIAVAVVWAVF. The Lumenal portion of the chain corresponds to 307–311; the sequence is RNEDR. Residues 312–332 form a helical membrane-spanning segment; the sequence is WAWILQDILGIAFCLNLIKTL. Residues 333-340 are Cytoplasmic-facing; the sequence is KLPNFKSC. A helical transmembrane segment spans residues 341-361; the sequence is VILLGLLLLYDVFFVFITPFI. Residue D351 is part of the active site. Over 362–399 the chain is Lumenal; it reads TKNGESIMVELAAGPFGNNEKLPVVIRVPKLIYFSVMS. The chain crosses the membrane as a helical span at residues 400-420; it reads VCLMPVSILGFGDIIVPGLLI. The active site involves D412. At 421–437 the chain is on the cytoplasmic side; it reads AYCRRFDVQTGSSYIYY. A helical membrane pass occupies residues 438–458; sequence VSSTVAYAIGMILTFVVLVLM. At 459-460 the chain is on the lumenal side; that stretch reads KK. Residues 461-481 form a helical membrane-spanning segment; that stretch reads GQPALLYLVPCTLITASVVAW. Positions 463-465 match the PAL motif; the sequence is PAL. Residues 482–520 are Cytoplasmic-facing; it reads RRKEMKKFWKGNSYQMMDHLDCATNEENPVISGEQIVQQ. Positions 495-498 match the YXXo lysosomal targeting motif motif; that stretch reads YQMM.

It belongs to the peptidase A22B family. In terms of assembly, interacts with ITM2B. In terms of processing, glycosylated. As to expression, ubiquitous.

It is found in the late endosome membrane. It localises to the lysosome membrane. The protein localises to the membrane. Its function is as follows. Intramembrane-cleaving aspartic protease (I-CLiP) that cleaves type II membrane signal peptides in the hydrophobic plane of the membrane. Functions in FASLG, ITM2B and TNF processing. Catalyzes the intramembrane cleavage of the anchored fragment of shed TNF-alpha (TNF), which promotes the release of the intracellular domain (ICD) for signaling to the nucleus. Also responsible for the intramembrane cleavage of Fas antigen ligand FASLG, which promotes the release of the intracellular FasL domain (FasL ICD). Essential for degradation of the invariant chain CD74 that plays a central role in the function of antigen-presenting cells in the immune system. Plays a role in the regulation of innate and adaptive immunity. Catalyzes the intramembrane cleavage of the simian foamy virus envelope glycoprotein gp130 independently of prior ectodomain shedding by furin or furin-like proprotein convertase (PC)-mediated cleavage proteolysis. This Homo sapiens (Human) protein is Signal peptide peptidase-like 2A.